Reading from the N-terminus, the 222-residue chain is Ribonuclease T (222 aa).

The Exonuclease domain occupies 20–194; it reads VVIDVETAGF…YDTERTAELF (175 aa). 4 residues coordinate Mg(2+): Asp23, Glu25, His181, and Asp186. The active-site Proton donor/acceptor is His181.

This sequence belongs to the RNase T family. Homodimer. The cofactor is Mg(2+).

In terms of biological role, trims short 3' overhangs of a variety of RNA species, leaving a one or two nucleotide 3' overhang. Responsible for the end-turnover of tRNA: specifically removes the terminal AMP residue from uncharged tRNA (tRNA-C-C-A). Also appears to be involved in tRNA biosynthesis. The sequence is that of Ribonuclease T from Shewanella sp. (strain MR-4).